Consider the following 470-residue polypeptide: 3-isopropylmalate dehydratase large subunit (470 aa).

Residues Cys351, Cys411, and Cys414 each coordinate [4Fe-4S] cluster.

The protein belongs to the aconitase/IPM isomerase family. LeuC type 1 subfamily. In terms of assembly, heterodimer of LeuC and LeuD. Requires [4Fe-4S] cluster as cofactor.

It catalyses the reaction (2R,3S)-3-isopropylmalate = (2S)-2-isopropylmalate. The protein operates within amino-acid biosynthesis; L-leucine biosynthesis; L-leucine from 3-methyl-2-oxobutanoate: step 2/4. Catalyzes the isomerization between 2-isopropylmalate and 3-isopropylmalate, via the formation of 2-isopropylmaleate. In Rhodopseudomonas palustris (strain BisA53), this protein is 3-isopropylmalate dehydratase large subunit.